We begin with the raw amino-acid sequence, 492 residues long: WD repeat-containing protein JIP5 (492 aa).

WD repeat units lie at residues 127 to 166, 178 to 217, 236 to 274, 276 to 317, and 365 to 405; these read RHKG…VVKK, KKND…LSNS, RSAY…ILIS, DQED…LEDQ, and RNHN…VEEN. Acidic residues-rich tracts occupy residues 404–414 and 422–433; these read ENASVESDSDE and DLSDDTSSDDET. Positions 404–472 are disordered; it reads ENASVESDSD…SKSVKKRKIM (69 aa). Residues 449–462 are compositionally biased toward basic and acidic residues; sequence KDLKEDHQEEKESN.

The protein belongs to the WD repeat WDR55 family. Interacts with BRE1, BUD27 and GIS1.

Its subcellular location is the nucleus. The protein resides in the nucleolus. This Saccharomyces cerevisiae (strain YJM789) (Baker's yeast) protein is WD repeat-containing protein JIP5 (JIP5).